The chain runs to 286 residues: 4-hydroxybenzoate octaprenyltransferase (286 aa).

The next 7 helical transmembrane spans lie at 22–42 (IGTL…EKAM), 45–65 (LSVL…GCVI), 98–118 (LFIV…LYTI), 143–163 (FFLG…TIEA), 213–233 (IIAL…YLSQ), 238–255 (YFIV…QCRL), and 266–286 (NAFL…LFGI).

This sequence belongs to the UbiA prenyltransferase family. Mg(2+) serves as cofactor.

The protein resides in the cell inner membrane. It carries out the reaction all-trans-octaprenyl diphosphate + 4-hydroxybenzoate = 4-hydroxy-3-(all-trans-octaprenyl)benzoate + diphosphate. Its pathway is cofactor biosynthesis; ubiquinone biosynthesis. In terms of biological role, catalyzes the prenylation of para-hydroxybenzoate (PHB) with an all-trans polyprenyl group. Mediates the second step in the final reaction sequence of ubiquinone-8 (UQ-8) biosynthesis, which is the condensation of the polyisoprenoid side chain with PHB, generating the first membrane-bound Q intermediate 3-octaprenyl-4-hydroxybenzoate. In Histophilus somni (strain 129Pt) (Haemophilus somnus), this protein is 4-hydroxybenzoate octaprenyltransferase.